The sequence spans 996 residues: Low-density lipoprotein receptor-related protein 8 (996 aa).

The signal sequence occupies residues 1 to 28 (MGRPELGALRPLALLLLLLLQLQHLSAA). Over 29–858 (DPLPGGQGPV…GSQMGSTVTA (830 aa)) the chain is Extracellular. LDL-receptor class A domains lie at 40 to 76 (ECEE…DDCP), 79 to 117 (TCAD…ATCS), 120 to 158 (ECPA…AGCP), 160 to 196 (LCAP…RGCS), 199 to 238 (ACPP…ELCG), 250 to 287 (ACAP…ADCS), 290 to 326 (PCRE…AGCL), and 330 to 369 (TCEG…KVCG). 30 disulfides stabilise this stretch: Cys41-Cys53, Cys48-Cys66, Cys60-Cys75, Cys80-Cys92, Cys87-Cys105, Cys99-Cys116, Cys121-Cys135, Cys128-Cys148, Cys142-Cys157, Cys161-Cys173, Cys168-Cys186, Cys180-Cys195, Cys200-Cys213, Cys207-Cys226, Cys220-Cys237, Cys251-Cys264, Cys259-Cys277, Cys271-Cys286, Cys291-Cys303, Cys298-Cys316, Cys310-Cys325, Cys331-Cys344, Cys339-Cys357, Cys351-Cys368, Cys373-Cys384, Cys380-Cys393, Cys395-Cys407, Cys413-Cys423, Cys419-Cys432, and Cys434-Cys447. Ca(2+) is bound by residues Trp58, Asp61, Asp63, Asp65, Asp71, and Glu72. Asn170 carries N-linked (GlcNAc...) asparagine glycosylation. In terms of domain architecture, EGF-like 1 spans 364-408 (PQKVCGLNECLHNNGGCSHICTDLKIGFECTCPAGFQLLDQKTCG). The region spanning 409-448 (DIDECQDPDACSQICVNYKGYFKCECHPGYEMDTLTKNCK) is the EGF-like 2; calcium-binding domain. LDL-receptor class B repeat units lie at residues 495–541 (NRIY…DWVH), 542–584 (KHIY…DPLR), 585–628 (GFMY…DLLS), 629–671 (QRLY…AVFE), and 672–714 (DKVF…FHEL). Asn551 carries an N-linked (GlcNAc...) asparagine glycan. The clustered O-linked oligosaccharides stretch occupies residues 773-831 (STSTTTLASAMTRTVPATTRAPGTTIHDPTYQNHSTETPSQTAAAPHSVNVPRAPSTSP). A disordered region spans residues 778-851 (TLASAMTRTV…SQHYGNEGSQ (74 aa)). Residues 802–815 (TYQNHSTETPSQTA) show a composition bias toward polar residues. The N-linked (GlcNAc...) asparagine glycan is linked to Asn805. Residues 824–839 (PRAPSTSPSTPSPATS) are compositionally biased toward low complexity. N-linked (GlcNAc...) asparagine glycosylation is present at Asn840. Residues 840 to 851 (NHSQHYGNEGSQ) are compositionally biased toward polar residues. Residues 859-881 (AVIGVIVPIVVIALLCMSGYLIW) form a helical membrane-spanning segment. At 882 to 996 (RNWKRKNTKS…ALSLEDDGLP (115 aa)) the chain is on the cytoplasmic side.

It belongs to the LDLR family. As to quaternary structure, homooligomer. Interacts with VLDLR. Reelin associates with two or more receptor molecules. Interacts with DAB1 and JNK-interacting proteins. Interacts with SNX17. Interacts with PCSK9. Interacts with MDK; this interaction is calcium dependent. Interacts with CLU. Post-translationally, O-glycosylated. Some alternatively spliced isoforms lack the O-linked sugar domain. In terms of processing, undergoes sequential, furin and gamma-secretase dependent, proteolytic processing, resulting in the extracellular release of the entire ligand-binding domain as a soluble polypeptide and in the intracellular domain (ICD) release into the cytoplasm. The gamma-secretase-dependent proteolytical processing occurs after the bulk of the extracellular domain has been shed, in a furin-dependent manner, in alternatively spliced isoforms carrying the furin cleavage site. Hypoglycosylation (mainly hypo-O-glycosylation) leads to increased extracellular cleavage, which in turn results in accelerating release of the intracellular domain (ICD) by the gamma-secretase. The resulting receptor fragment is able to inhibit Reelin signaling and in particular the Reelin-induced DAB1 phosphorylation. Tyrosine phosphorylated upon apoE binding. Post-translationally, ubiquitinated by MYLIP leading to degradation. As to expression, expressed in neurons throughout the brain, with strong expression in pyramidal neurons of the hippocampus, granule cells of the dentate gyrus, cortical neurons and Purkinje cells of the cerebellum. Also expressed in the epithelium of the choroid plexus and of the blood vessels (apical expression), as well as in the epididymis.

It is found in the cell membrane. Its subcellular location is the secreted. Functionally, cell surface receptor for Reelin (RELN) and apolipoprotein E (apoE)-containing ligands. LRP8 participates in transmitting the extracellular Reelin signal to intracellular signaling processes, by binding to DAB1 on its cytoplasmic tail. Reelin acts via both the VLDL receptor (VLDLR) and LRP8 to regulate DAB1 tyrosine phosphorylation and microtubule function in neurons. LRP8 has higher affinity for Reelin than VLDLR. LRP8 is thus a key component of the Reelin pathway which governs neuronal layering of the forebrain during embryonic brain development. Binds the endoplasmic reticulum resident receptor-associated protein (RAP). Binds dimers of beta 2-glycoprotein I and may be involved in the suppression of platelet aggregation in the vasculature. Highly expressed in the initial segment of the epididymis, where it affects the functional expression of clusterin and phospholipid hydroperoxide glutathione peroxidase (PHGPx), two proteins required for sperm maturation. May also function as an endocytic receptor. Not required for endocytic uptake of SEPP1 in the kidney which is mediated by LRP2. Together with its ligand, apolipoprotein E (apoE), may indirectly play a role in the suppression of the innate immune response by controlling the survival of myeloid-derived suppressor cells. The protein is Low-density lipoprotein receptor-related protein 8 (Lrp8) of Mus musculus (Mouse).